The primary structure comprises 437 residues: MKWVTVDRLPQYEGQTVELRGWVQNYRSSGKIQFIIFRDGTGVCQAVLFIKDVPPEVFEAGKRLTQESSIIIRGSVRKDDRAPGGYEIGVQDLEIVQIAEEYPITKKEHGTEFLMDHRHLWIRSNRQVAILRIRNEITMAIHQFLQENGFVLTESPILMGTAAEGGATLFETTYVNDEPAYLSQSGQLHVEATAMALGRVYTFGPTFRAEKSKTRRHLIEFWMVEPEAAYFTHEDNMRLQEEMVTYVVRRVLERRSKELQLIGRDTTLLEKVEPPFPRITYTEAVEMLKKLHKPGDEWEPIEWGEDFGAPHETVLTQQFEKPVFVEKFPVKVKAFYMQPDPENPDVVLGADLLAPEGYGEIIGGSQRIHDPELLKRRFEEHGLDMNTYGWYYDLRRFGSVPHSGFGLGIERTVAWICGLEHVRETIPFPRLLNRLHP.

Belongs to the class-II aminoacyl-tRNA synthetase family. As to quaternary structure, homodimer.

It localises to the cytoplasm. It carries out the reaction tRNA(Asn) + L-asparagine + ATP = L-asparaginyl-tRNA(Asn) + AMP + diphosphate + H(+). The sequence is that of Asparagine--tRNA ligase from Symbiobacterium thermophilum (strain DSM 24528 / JCM 14929 / IAM 14863 / T).